The following is a 486-amino-acid chain: Glutamate--tRNA ligase (486 aa).

The 'HIGH' region signature appears at proline 11–asparagine 21. Positions lysine 255 to arginine 259 match the 'KMSKS' region motif. An ATP-binding site is contributed by lysine 258.

This sequence belongs to the class-I aminoacyl-tRNA synthetase family. Glutamate--tRNA ligase type 1 subfamily. As to quaternary structure, monomer.

It is found in the cytoplasm. The catalysed reaction is tRNA(Glu) + L-glutamate + ATP = L-glutamyl-tRNA(Glu) + AMP + diphosphate. Catalyzes the attachment of glutamate to tRNA(Glu) in a two-step reaction: glutamate is first activated by ATP to form Glu-AMP and then transferred to the acceptor end of tRNA(Glu). The protein is Glutamate--tRNA ligase of Streptococcus pneumoniae (strain ATCC BAA-255 / R6).